Here is a 208-residue protein sequence, read N- to C-terminus: AN1-type zinc finger protein 6 (208 aa).

The A20-type zinc finger occupies 8–42; sequence SQVPMLCSTGCGFYGNPRTNGMCSVCYKEHLQRQN. The Zn(2+) site is built by Cys14, Cys18, Cys30, and Cys33. A compositionally biased stretch (polar residues) spans 41-68; it reads QNSSNGRISPPATSVSSLSESLPVQCTD. Residues 41–140 are disordered; it reads QNSSNGRISP…PSEEQSKSLE (100 aa). Ser49 is modified (phosphoserine). The segment covering 75–94 has biased composition (low complexity); it reads QSTLDSTSSSMQPSPVSNQS. Composition is skewed to polar residues over residues 95 to 110 and 120 to 133; these read LLSE…STSV and LQAS…QPSE. The AN1-type zinc finger occupies 143–189; sequence KQKKNRCFMCRKKVGLTGFECRCGNVYCGVHRYSDVHNCSYNYKADA. Zn(2+) contacts are provided by Cys149, Cys152, Cys163, Cys165, Cys170, His173, His179, and Cys181. At Lys204 the chain carries N6-acetyllysine.

As to quaternary structure, interacts with PKN1. Interacts with TRAF2. Interacts with mono- and polyubiquitin. Interacts with PEX6. Interacts with PEX5 (Cys-linked ubiquitinated).

It is found in the cytoplasm. Its function is as follows. Involved in regulation of TNF-alpha induced NF-kappa-B activation and apoptosis. Involved in modulation of 'Lys-48'-linked polyubiquitination status of TRAF2 and decreases association of TRAF2 with RIPK1. Required for PTS1 target sequence-dependent protein import into peroxisomes and PEX5 stability; may cooperate with PEX6. In vitro involved in PEX5 export from the cytosol to peroxisomes. This Pongo abelii (Sumatran orangutan) protein is AN1-type zinc finger protein 6 (ZFAND6).